A 524-amino-acid chain; its full sequence is Origin of replication complex subunit 5 (524 aa).

The segment covering 1–19 (MSQPVTPRRTTRSSASASP) has biased composition (low complexity). The segment at 1-56 (MSQPVTPRRTTRSSASASPSPAPASPTSPPKSRPKPSPRRQLLAAAAAPPKEDGSS) is disordered. A compositionally biased stretch (pro residues) spans 20–31 (SPAPASPTSPPK). Residues 39-49 (RRQLLAAAAAP) are compositionally biased toward low complexity. 90 to 97 (GGAATGKT) is a binding site for ATP.

The protein belongs to the ORC5 family. In terms of assembly, component of the origin recognition complex (ORC) composed of at least ORC1, ORC2, ORC3, ORC4, ORC5 and ORC6. ORC is regulated in a cell-cycle and development dependent manner. It is sequentially assembled at the exit from anaphase of mitosis and disassembled as cells enter S phase.

It localises to the nucleus. Component of the origin recognition complex (ORC) that binds origins of replication. DNA-binding is ATP-dependent. The specific DNA sequences that define origins of replication have not been identified yet. ORC is required to assemble the pre-replication complex necessary to initiate DNA replication. The protein is Origin of replication complex subunit 5 of Oryza sativa subsp. indica (Rice).